The chain runs to 134 residues: Arginine decarboxylase proenzyme (134 aa).

S82 serves as the catalytic Schiff-base intermediate with substrate; via pyruvic acid. S82 carries the post-translational modification Pyruvic acid (Ser); by autocatalysis. The active-site Proton acceptor; for processing activity is the H87. Catalysis depends on C102, which acts as the Proton donor; for catalytic activity.

Belongs to the prokaryotic AdoMetDC family. Type 1 subfamily. In terms of assembly, heterooctamer of four alpha and four beta chains arranged as a tetramer of alpha/beta heterodimers. It depends on pyruvate as a cofactor. In terms of processing, is synthesized initially as an inactive proenzyme. Formation of the active enzyme involves a self-maturation process in which the active site pyruvoyl group is generated from an internal serine residue via an autocatalytic post-translational modification. Two non-identical subunits are generated from the proenzyme in this reaction, and the pyruvate is formed at the N-terminus of the alpha chain, which is derived from the carboxyl end of the proenzyme. The post-translation cleavage follows an unusual pathway, termed non-hydrolytic serinolysis, in which the side chain hydroxyl group of the serine supplies its oxygen atom to form the C-terminus of the beta chain, while the remainder of the serine residue undergoes an oxidative deamination to produce ammonia and the pyruvoyl group blocking the N-terminus of the alpha chain.

The enzyme catalyses L-arginine + H(+) = agmatine + CO2. It functions in the pathway amine and polyamine biosynthesis; agmatine biosynthesis; agmatine from L-arginine: step 1/1. In terms of biological role, specifically catalyzes the decarboxylation of L-arginine to agmatine. Has no S-adenosylmethionine decarboxylase (AdoMetDC) activity. This chain is Arginine decarboxylase proenzyme, found in Saccharolobus islandicus (strain M.16.4 / Kamchatka #3) (Sulfolobus islandicus).